Reading from the N-terminus, the 230-residue chain is Probable tetraspanin tspD (230 aa).

Residues 1-20 (MVEYLPSTPRYLKVPLIILN) lie on the Cytoplasmic side of the membrane. Residues 21-41 (VILWLLGLVLVIIGGICVGFF) form a helical membrane-spanning segment. The Extracellular portion of the chain corresponds to 42-65 (SRFKELQEVGGVSESIKSISVSLP). A helical membrane pass occupies residues 66–86 (AGVLSIGIFFMVLTVAGCIVA). The Cytoplasmic segment spans residues 87-90 (YKEK). Residues 91 to 111 (MVGLVFYTILMLVLLVVLIGI) form a helical membrane-spanning segment. Residues 112–200 (GGEALTYHNA…VNSKLYLVGS (89 aa)) lie on the Extracellular side of the membrane. 4 N-linked (GlcNAc...) asparagine glycosylation sites follow: asparagine 133, asparagine 138, asparagine 163, and asparagine 179. Residues 201–221 (AGVAIGVIELVSLMFALFLIV) form a helical membrane-spanning segment. Over 222–230 (RLYKSNSYR) the chain is Cytoplasmic.

Belongs to the tetraspanin (TM4SF) family.

The protein localises to the membrane. The polypeptide is Probable tetraspanin tspD (tspD) (Dictyostelium discoideum (Social amoeba)).